The primary structure comprises 208 residues: uncharacterized protein (208 aa).

The span at 118–134 (QYPNQYQQQPQQQQPGY) shows a compositional bias: low complexity. The segment at 118–208 (QYPNQYQQQP…HKKEKNEIKE (91 aa)) is disordered. Residues 138-175 (NYNQPPVQLNKQAYDNYQQNDYKSNNQPNLAKENNISN) show a composition bias toward polar residues. Residues 187–201 (KKEKKHSFFSKLHKK) show a composition bias toward basic residues.

This is an uncharacterized protein from Dictyostelium discoideum (Social amoeba).